A 239-amino-acid chain; its full sequence is Succinate dehydrogenase [ubiquinone] iron-sulfur subunit (239 aa).

The 90-residue stretch at 11–100 (FKVYRWNPDK…EMKIYPLPHM (90 aa)) folds into the 2Fe-2S ferredoxin-type domain. Cys-61, Cys-66, Cys-69, and Cys-81 together coordinate [2Fe-2S] cluster. One can recognise a 4Fe-4S ferredoxin-type domain in the interval 141 to 171 (DREKLDGLYECVLCACCSTSCPSYWWNSDKY). [4Fe-4S] cluster is bound by residues Cys-151, Cys-154, and Cys-157. Position 161 (Cys-161) interacts with [3Fe-4S] cluster. Trp-166 contacts a ubiquinone. [3Fe-4S] cluster-binding residues include Cys-208 and Cys-214. A [4Fe-4S] cluster-binding site is contributed by Cys-218.

The protein belongs to the succinate dehydrogenase/fumarate reductase iron-sulfur protein family. In terms of assembly, component of complex II composed of four subunits: a flavoprotein (FP), an iron-sulfur protein (IP), and a cytochrome b composed of a large and a small subunit. The cofactor is [2Fe-2S] cluster. Requires [3Fe-4S] cluster as cofactor. [4Fe-4S] cluster serves as cofactor.

It is found in the mitochondrion inner membrane. The enzyme catalyses a quinone + succinate = fumarate + a quinol. It functions in the pathway carbohydrate metabolism; tricarboxylic acid cycle; fumarate from succinate (eukaryal route): step 1/1. Iron-sulfur protein (IP) subunit of succinate dehydrogenase (SDH) that is involved in complex II of the mitochondrial electron transport chain and is responsible for transferring electrons from succinate to ubiquinone (coenzyme Q). This is Succinate dehydrogenase [ubiquinone] iron-sulfur subunit (SDH2) from Reclinomonas americana.